The chain runs to 403 residues: Succinoglycan biosynthesis protein ExoL (403 aa).

The protein localises to the cytoplasm. It participates in glycan metabolism; exopolysaccharide biosynthesis. In terms of biological role, essential for succinoglycan (EPS I) synthesis and nodule infection. Glycosyltransferase needed for the addition of the third sugar (glucose), catalyzes the formation of a beta-1,4 linkage between the second and third sugars. The protein is Succinoglycan biosynthesis protein ExoL (exoL) of Rhizobium meliloti (strain 1021) (Ensifer meliloti).